The following is a 400-amino-acid chain: Acetate kinase (400 aa).

N7 is a Mg(2+) binding site. An ATP-binding site is contributed by K14. Substrate is bound at residue R85. The Proton donor/acceptor role is filled by D142. ATP contacts are provided by residues 202 to 206, 278 to 280, and 326 to 330; these read HLGNG, DMR, and GIGEN. E380 is a binding site for Mg(2+).

The protein belongs to the acetokinase family. Homodimer. It depends on Mg(2+) as a cofactor. Mn(2+) is required as a cofactor.

It is found in the cytoplasm. It carries out the reaction acetate + ATP = acetyl phosphate + ADP. Its pathway is metabolic intermediate biosynthesis; acetyl-CoA biosynthesis; acetyl-CoA from acetate: step 1/2. Functionally, catalyzes the formation of acetyl phosphate from acetate and ATP. Can also catalyze the reverse reaction. This is Acetate kinase from Deinococcus deserti (strain DSM 17065 / CIP 109153 / LMG 22923 / VCD115).